An 89-amino-acid chain; its full sequence is UPF0473 protein Helmi_02360 (89 aa).

The protein belongs to the UPF0473 family.

The sequence is that of UPF0473 protein Helmi_02360 from Heliobacterium modesticaldum (strain ATCC 51547 / Ice1).